A 1452-amino-acid chain; its full sequence is MAPEEGDQAMSHEDKAACSSLNTTSSTELFDGAPSSENERLRIRQAAVDAMHHGSPKIDPQIWTDVTSHLSGSTTIDARQRDIFFENLTVHGKGSSLQIQKTVLSALLYPIAYPVKRLMSIVGNKKPHNDRRTILHGFNGILNSGELLLVLGRPGSGCSTFLKSLCGYLEGLDLDPVSEIQYRGVPFRVMIEKYRGDLVYNQEADHHFPNLTVGQTLEFAAHARAPHNQVGNSSRDQYVKSVVKVVMDTFGLSHTYDTNVGNDFVPGVSGGERKRVRTDTIVGMNSIAETVLSRTSIAAWDNSTRGLDAATAVDFVRSLRTSAKLAGSCHAVAVYQASEGLYNTFDKVILLYEGREIYFGPRQGAVAYFETMGWKRPPQQVSADFLTAITNPGERQPQVGMENAVPRTPVEFESYWKNSPEHAELETSMRQYKMKTPLDSSEEIKLDEIKRLEQSNHARISSPYLLSVPMQIRLCIVRAWQRTRNDIPALIATAVAQTVVSLIIGSLFYNIPENTAGLGQRASVLFLAVLTNALISLLEITTLYSQRLIVEKQAAYAFVHPFTEAIAEVIVDFPIKLFRCLLSAIIVYFLANLRREASHFFIYIMFQLTAVMTMATIFRTLATVTRTIGQAMALAGVVIICIAVYTGFTVPQFDMPPWFGWIRWLNPIFYTFEGIVSNEFHGRHFECVEYIPSLSFEQGLSFTCSYVGSIAGERYVSGDAYIAGSYDYSYDHVWRNYGILVAFLVFFYVLYFWLTELIPGTTPAHEVLIFRHGGVLQRLVRGDLERGESIRLQEVKSLASEVHSSKAEQKNTFSWKGLSYDIPVKGGEKRLLDDVSGWVKPGSLTALMGVSGAGKTTLMNVLARRMTIGVVTGDMFVNGRELDASFARNIGYVQQQDLHVETCTIREALRFSAALRQPQSVSMEEKYNFVEEVIQLLGMQNFAEAVIGSPGDGLNMEQRKLLSIGVELAAKPQLLIFLDEPTSGLDSRSSWAICAFMRKLADHGQPVLATIHQPSAVLFEQFDRLLFLAKGGRTVYFGDIGKQARTVLEYLEDKGARHCGPTENPAEYMLEVIGGGTQGQSTSIDWVQAWKRSTEYNKLLGELDILASSPSNGVSADPYMVGEFAMPLLVQFYHVMKRDLQQYYRQPEYILAKFGAGVFCGVFIGFSFWKSDNSSQGFQNVLFSLFLLCTIFSTLVNQIMPKFLSRRTLYELRERPARTYSWKVFILCQILVELPWQTLLGICTWASFYFSVYGSGQSSQRQGLVLLFTVQFFIFASTFAQLVVAAVPSVVLGSMLATFTFLLCLLFNGTMQPPSALPRFWIFMNRVSPLTYYVGGISATALHGRPIHCSNRELRVFDPPQGQNCGQYLAEYLKTAQGTLSNPLSTDQCQYCPLRVADQYLAARDISWDDRWRNFGIFWVYIIFNVIGAVLLYYLFRVLPYIRRNRTQKSRN.

Residues 1–38 (MAPEEGDQAMSHEDKAACSSLNTTSSTELFDGAPSSEN) form a disordered region. Polar residues predominate over residues 19 to 28 (SSLNTTSSTE). In terms of domain architecture, ABC transporter 1 spans 116–378 (KRLMSIVGNK…FETMGWKRPP (263 aa)). 6 helical membrane passes run 487–507 (IPALIATAVAQTVVSLIIGSL), 524–544 (VLFLAVLTNALISLLEITTLY), 569–589 (VIVDFPIKLFRCLLSAIIVYF), 598–618 (SHFFIYIMFQLTAVMTMATIF), 631–651 (AMALAGVVIICIAVYTGFTVP), and 738–758 (GILVAFLVFFYVLYFWLTELI). The ABC transporter 2 domain maps to 813–1055 (FSWKGLSYDI…TVLEYLEDKG (243 aa)). Residue 849 to 856 (GVSGAGKT) participates in ATP binding. The next 7 helical transmembrane spans lie at 1149 to 1169 (YILAKFGAGVFCGVFIGFSFW), 1181 to 1201 (VLFSLFLLCTIFSTLVNQIMP), 1224 to 1244 (VFILCQILVELPWQTLLGICT), 1264 to 1284 (LVLLFTVQFFIFASTFAQLVV), 1287 to 1307 (VPSVVLGSMLATFTFLLCLLF), 1322 to 1344 (IFMNRVSPLTYYVGGISATALHG), and 1415 to 1435 (FGIFWVYIIFNVIGAVLLYYL).

This sequence belongs to the ABC transporter superfamily. ABCG family. PDR (TC 3.A.1.205) subfamily.

Its subcellular location is the membrane. ABC-type transporter; part of the gene cluster that mediates the biosynthesis of the meroterpenoid compound andrastin A, a promising antitumoral compound. Is required for the production of andrastin A but does not have a significant role in its secretion. This chain is ABC-type transporter adrC, found in Penicillium roqueforti.